Consider the following 155-residue polypeptide: Ribonuclease H (155 aa).

Residues 1–146 (MPELFAYTDG…ADELARAGMK (146 aa)) form the RNase H type-1 domain. 4 residues coordinate Mg(2+): Asp9, Glu52, Asp74, and Asp138.

It belongs to the RNase H family. Monomer. Mg(2+) is required as a cofactor.

It is found in the cytoplasm. It carries out the reaction Endonucleolytic cleavage to 5'-phosphomonoester.. Its function is as follows. Endonuclease that specifically degrades the RNA of RNA-DNA hybrids. This Ruegeria pomeroyi (strain ATCC 700808 / DSM 15171 / DSS-3) (Silicibacter pomeroyi) protein is Ribonuclease H.